The primary structure comprises 83 residues: MASNASADVTTMTFERAIEELESIVKRLEDGKVPLEESVAIYERGETLKRRCEELLRQAEARVDKITTDANGAPVGTEPLDVR.

Belongs to the XseB family. Heterooligomer composed of large and small subunits.

It is found in the cytoplasm. It catalyses the reaction Exonucleolytic cleavage in either 5'- to 3'- or 3'- to 5'-direction to yield nucleoside 5'-phosphates.. Functionally, bidirectionally degrades single-stranded DNA into large acid-insoluble oligonucleotides, which are then degraded further into small acid-soluble oligonucleotides. This Afipia carboxidovorans (strain ATCC 49405 / DSM 1227 / KCTC 32145 / OM5) (Oligotropha carboxidovorans) protein is Exodeoxyribonuclease 7 small subunit.